The sequence spans 642 residues: Threonine--tRNA ligase (642 aa).

In terms of domain architecture, TGS spans 1 to 61 (MPVITLPDGS…ENDATLSIIT (61 aa)). The catalytic stretch occupies residues 243-534 (DHRKIGKQLD…LTEEFAGFFP (292 aa)). 3 residues coordinate Zn(2+): C334, H385, and H511.

Belongs to the class-II aminoacyl-tRNA synthetase family. Homodimer. Requires Zn(2+) as cofactor.

It is found in the cytoplasm. The enzyme catalyses tRNA(Thr) + L-threonine + ATP = L-threonyl-tRNA(Thr) + AMP + diphosphate + H(+). Catalyzes the attachment of threonine to tRNA(Thr) in a two-step reaction: L-threonine is first activated by ATP to form Thr-AMP and then transferred to the acceptor end of tRNA(Thr). Also edits incorrectly charged L-seryl-tRNA(Thr). In Salmonella heidelberg (strain SL476), this protein is Threonine--tRNA ligase.